The following is a 310-amino-acid chain: Repression factor of MSEs protein 1 (310 aa).

Disordered stretches follow at residues 83 to 155 (TQEV…EANA) and 192 to 230 (DGIR…DEGE). The span at 92–106 (RNTSSSSSSTRSNSS) shows a compositional bias: low complexity. Residues 107–120 (ADISDTEYSGENTP) show a composition bias toward polar residues. Residues 127–136 (SRRRRTRSRA) are compositionally biased toward basic residues. Over residues 139–155 (RENSLPASLPSISEANA) the composition is skewed to polar residues. Residues 192–208 (DGIRRRSSRISERDKRR) show a composition bias toward basic and acidic residues. At Ser-215 the chain carries Phosphoserine.

As to quaternary structure, interacts directly with HST1 and SUM1. Required for the interaction between HST1 and SUM1.

It localises to the nucleus. Its function is as follows. Tethering factor required for histone deacetylase HST1-mediated repression. Probably involved in targeting HST1 to a subset of SUM1-regulated genes. The protein is Repression factor of MSEs protein 1 (RFM1) of Saccharomyces cerevisiae (strain ATCC 204508 / S288c) (Baker's yeast).